Here is an 874-residue protein sequence, read N- to C-terminus: Coatomer subunit gamma-1 (874 aa).

Residues 1–11 (MLKKFDKKDEE) are compositionally biased toward basic and acidic residues. The interval 1–21 (MLKKFDKKDEESGGGSNPLQH) is disordered. 4 HEAT repeats span residues 64–101 (TEAT…IAED), 283–320 (KELA…KHPS), 322–355 (VTAC…GSES), and 356–392 (SIDR…KYPR). Position 594 is a phosphothreonine (Thr594). The interaction with ZNF289/ARFGAP2 stretch occupies residues 609-874 (RQEIFQEQLA…PVDIILASVG (266 aa)).

It belongs to the COPG family. As to quaternary structure, oligomeric complex that consists of at least the alpha, beta, beta', gamma, delta, epsilon and zeta subunits. Interacts with ZNF289/ARFGAP2 through its C-terminal appendage domain. Interacts with EGFR upon EGF treatment; interaction is essential for regulation of EGF-dependent nuclear transport of EGFR by retrograde trafficking from the Golgi to the ER. The coatomer interacts with KDEL receptors; the interaction is important for retrograde trafficking of KDEL-bearing proteins from the Golgi to the endoplasmic reticulum. Interacts with COPB1. Interacts with TMED10 (via C-terminus). Interacts with TMED2, TMED3, TMED7 and TMED9.

It localises to the cytoplasm. Its subcellular location is the cytosol. The protein localises to the golgi apparatus membrane. It is found in the cytoplasmic vesicle. The protein resides in the COPI-coated vesicle membrane. Its function is as follows. The coatomer is a cytosolic protein complex that binds to dilysine motifs and reversibly associates with Golgi non-clathrin-coated vesicles, which further mediate biosynthetic protein transport from the ER, via the Golgi up to the trans Golgi network. Coatomer complex is required for budding from Golgi membranes, and is essential for the retrograde Golgi-to-ER transport of dilysine-tagged proteins. In mammals, the coatomer can only be recruited by membranes associated to ADP-ribosylation factors (ARFs), which are small GTP-binding proteins; the complex also influences the Golgi structural integrity, as well as the processing, activity, and endocytic recycling of LDL receptors. Required for limiting lipid storage in lipid droplets. Involved in lipid homeostasis by regulating the presence of perilipin family members PLIN2 and PLIN3 at the lipid droplet surface and promoting the association of adipocyte triglyceride lipase (PNPLA2) with the lipid droplet surface to mediate lipolysis. The sequence is that of Coatomer subunit gamma-1 (Copg1) from Mus musculus (Mouse).